The chain runs to 185 residues: Adenine phosphoribosyltransferase (185 aa).

It belongs to the purine/pyrimidine phosphoribosyltransferase family. In terms of assembly, homodimer.

It is found in the cytoplasm. It catalyses the reaction AMP + diphosphate = 5-phospho-alpha-D-ribose 1-diphosphate + adenine. It participates in purine metabolism; AMP biosynthesis via salvage pathway; AMP from adenine: step 1/1. Catalyzes a salvage reaction resulting in the formation of AMP, that is energically less costly than de novo synthesis. The polypeptide is Adenine phosphoribosyltransferase (Nocardioides sp. (strain ATCC BAA-499 / JS614)).